We begin with the raw amino-acid sequence, 64 residues long: MPKLKTNRGAVKRFKVTGSGKIKRAASNHNHMLTKKSQKRKRRLRKIHEVAPSDMRAVSEMLRD.

The protein belongs to the bacterial ribosomal protein bL35 family.

This chain is Large ribosomal subunit protein bL35, found in Coxiella burnetii (strain RSA 331 / Henzerling II).